Reading from the N-terminus, the 332-residue chain is N-arachidonyl glycine receptor (332 aa).

The Extracellular portion of the chain corresponds to 1–26 (MTTPHSQAQPGLPIDPHPDEYKVAAL). The helical transmembrane segment at 27 to 47 (VFYSCIFIIGLFVNVTALWVF) threads the bilayer. Residues 48-56 (SCTTKKRTT) lie on the Cytoplasmic side of the membrane. The helical transmembrane segment at 57–77 (VTVYMMNVALLDLVFIMSLPF) threads the bilayer. The Extracellular portion of the chain corresponds to 78 to 95 (RMLYYAKGEWPFGEYFCR). Residues C94 and C173 are joined by a disulfide bond. The chain crosses the membrane as a helical span at residues 96–116 (ILGALTVFYPSIALWLLAFIS). Residues 117-138 (ADRYMAIVQPKYAKELKNTCKA) lie on the Cytoplasmic side of the membrane. A helical membrane pass occupies residues 139–159 (VMACVGVWIMTLTTTIPLLLL). At 160 to 192 (YEDPDTASSTPPTCLKISDIIYLKAINALNFTR) the chain is on the extracellular side. N189 is a glycosylation site (N-linked (GlcNAc...) asparagine). Residues 193–213 (LIFFFLIPLFIMIGCYLVIIH) form a helical membrane-spanning segment. Over 214 to 233 (SLLHGKTSKLKPKVKEKSIR) the chain is Cytoplasmic. Residues 234–254 (IIITLMVQVLVCFMPFHICFA) form a helical membrane-spanning segment. Residues 255–269 (FLMLGGDENSYNPWG) are Extracellular-facing. The chain crosses the membrane as a helical span at residues 270–290 (AFTTFLMNLSTCLDVILYYIV). At 291 to 332 (SKQFQARVISVMLYRNYLRSVRRKSFRSGSLRSLSNINSEML) the chain is on the cytoplasmic side. S323 bears the Phosphoserine mark.

This sequence belongs to the G-protein coupled receptor 1 family.

It is found in the cell membrane. Its subcellular location is the cytoplasmic vesicle membrane. In terms of biological role, g protein-coupled receptor (GPCR) that plays a role in diverse physiological processes particularly within the immune and nervous systems. Becomes active when triggered by various endogenous ligands including endocannabinoid N-arachidonyl glycine (NAGly), delta-9-tetrahydrocannabinol or resolvin D2/RvD2 derived from the omega-3 fatty acid docosahexaenoic acid (DHA). Upon RvD2 binding, facilitates the resolution of inflammation, aiding in tissue repair and homeostasis. Mechanistically, RvD2 ligation initiates Galphas protein coupling, activation of cAMP-PKA signaling pathway and phosphorylation of STAT3, leading to RvD2-stimulated macrophage phagocytosis. Mediates NAGly-induced process of reorganization of actin filaments and induction of acrosomal exocytosis. Activation by N-arachidonoyl glycine (NAGly) can also induce apoptosis in macrophages. Plays a role in homeostasis of CD8+ subsets of intraepithelial lymphocytes (IELs) (CD8alphaalpha and CD8alphabeta IELs) in small intestine by supporting preferential migration of CD8alphaalpha T-cells to intraepithelial compartment over lamina propria compartment, and by mediating their reconstitution into small intestine after bone marrow transplant. Participates also in hypotensive responses, mediating reduction in intraocular and blood pressure. This is N-arachidonyl glycine receptor (GPR18) from Bos taurus (Bovine).